The chain runs to 415 residues: L-cysteine:1D-myo-inositol 2-amino-2-deoxy-alpha-D-glucopyranoside ligase (415 aa).

Cys43 is a Zn(2+) binding site. L-cysteinyl-5'-AMP contacts are provided by residues 43 to 46 (CGIT), Thr58, and 81 to 83 (NVT). The 'HIGH' region signature appears at 45–55 (ITPYDATHLGH). A 'ERGGDP' region motif is present at residues 188–193 (ERGGDP). Trp229 provides a ligand contact to L-cysteinyl-5'-AMP. Cys233 contacts Zn(2+). Position 251–253 (251–253 (GSD)) interacts with L-cysteinyl-5'-AMP. A Zn(2+)-binding site is contributed by His258. Val285 provides a ligand contact to L-cysteinyl-5'-AMP. The 'KMSKS' region motif lies at 291–295 (KMSKS).

It belongs to the class-I aminoacyl-tRNA synthetase family. MshC subfamily. As to quaternary structure, monomer. It depends on Zn(2+) as a cofactor.

It catalyses the reaction 1D-myo-inositol 2-amino-2-deoxy-alpha-D-glucopyranoside + L-cysteine + ATP = 1D-myo-inositol 2-(L-cysteinylamino)-2-deoxy-alpha-D-glucopyranoside + AMP + diphosphate + H(+). Its function is as follows. Catalyzes the ATP-dependent condensation of GlcN-Ins and L-cysteine to form L-Cys-GlcN-Ins. This chain is L-cysteine:1D-myo-inositol 2-amino-2-deoxy-alpha-D-glucopyranoside ligase, found in Cellulomonas flavigena (strain ATCC 482 / DSM 20109 / BCRC 11376 / JCM 18109 / NBRC 3775 / NCIMB 8073 / NRS 134).